Consider the following 348-residue polypeptide: GTPase Obg (348 aa).

Residues 1 to 159 form the Obg domain; sequence MKFLDQARIY…MTLWLRLKLI (159 aa). One can recognise an OBG-type G domain in the interval 160-327; sequence ADAGLVGLPN…TLQSLLAAID (168 aa). GTP contacts are provided by residues 166 to 173, 191 to 195, 212 to 215, 279 to 282, and 308 to 310; these read GLPNAGKS, FTTLH, DIPG, SKID, and SAA. Mg(2+) contacts are provided by serine 173 and threonine 193.

The protein belongs to the TRAFAC class OBG-HflX-like GTPase superfamily. OBG GTPase family. In terms of assembly, monomer. The cofactor is Mg(2+).

The protein resides in the cytoplasm. Functionally, an essential GTPase which binds GTP, GDP and possibly (p)ppGpp with moderate affinity, with high nucleotide exchange rates and a fairly low GTP hydrolysis rate. Plays a role in control of the cell cycle, stress response, ribosome biogenesis and in those bacteria that undergo differentiation, in morphogenesis control. The sequence is that of GTPase Obg from Beijerinckia indica subsp. indica (strain ATCC 9039 / DSM 1715 / NCIMB 8712).